A 364-amino-acid chain; its full sequence is Putative acetyl-CoA C-acetyltransferase YhfS (364 aa).

The Acyl-thioester intermediate role is filled by cysteine 82. Histidine 318 serves as the catalytic Proton acceptor.

The protein belongs to the thiolase-like superfamily. Thiolase family.

In terms of biological role, may be involved in fatty acid metabolism. This is Putative acetyl-CoA C-acetyltransferase YhfS (yhfS) from Bacillus subtilis (strain 168).